The chain runs to 372 residues: Glutamate 5-kinase (372 aa).

ATP is bound at residue lysine 14. Substrate-binding residues include serine 54, aspartate 141, and asparagine 153. Threonine 173–aspartate 174 is a binding site for ATP. The PUA domain maps to arginine 280 to methionine 358.

The protein belongs to the glutamate 5-kinase family.

It localises to the cytoplasm. It catalyses the reaction L-glutamate + ATP = L-glutamyl 5-phosphate + ADP. The protein operates within amino-acid biosynthesis; L-proline biosynthesis; L-glutamate 5-semialdehyde from L-glutamate: step 1/2. Functionally, catalyzes the transfer of a phosphate group to glutamate to form L-glutamate 5-phosphate. This chain is Glutamate 5-kinase, found in Burkholderia multivorans (strain ATCC 17616 / 249).